A 390-amino-acid polypeptide reads, in one-letter code: Alkanesulfonate monooxygenase 1 (390 aa).

Residues threonine 364 to serine 390 are disordered.

Belongs to the SsuD family.

It carries out the reaction an alkanesulfonate + FMNH2 + O2 = an aldehyde + FMN + sulfite + H2O + 2 H(+). Its function is as follows. Catalyzes the desulfonation of aliphatic sulfonates. The protein is Alkanesulfonate monooxygenase 1 (ssuD1) of Mesorhizobium japonicum (strain LMG 29417 / CECT 9101 / MAFF 303099) (Mesorhizobium loti (strain MAFF 303099)).